The sequence spans 154 residues: Urease accessory protein UreE (154 aa).

It belongs to the UreE family.

The protein resides in the cytoplasm. Involved in urease metallocenter assembly. Binds nickel. Probably functions as a nickel donor during metallocenter assembly. The sequence is that of Urease accessory protein UreE from Prochlorococcus marinus subsp. pastoris (strain CCMP1986 / NIES-2087 / MED4).